The following is a 398-amino-acid chain: 4-hydroxy-3-methylbut-2-enyl diphosphate reductase (398 aa).

Residue C66 participates in [4Fe-4S] cluster binding. H96 is a (2E)-4-hydroxy-3-methylbut-2-enyl diphosphate binding site. H96 contributes to the dimethylallyl diphosphate binding site. H96 is an isopentenyl diphosphate binding site. C157 serves as a coordination point for [4Fe-4S] cluster. Residue H185 coordinates (2E)-4-hydroxy-3-methylbut-2-enyl diphosphate. Residue H185 coordinates dimethylallyl diphosphate. Isopentenyl diphosphate is bound at residue H185. The Proton donor role is filled by E187. (2E)-4-hydroxy-3-methylbut-2-enyl diphosphate is bound at residue T250. Residue C288 coordinates [4Fe-4S] cluster. (2E)-4-hydroxy-3-methylbut-2-enyl diphosphate contacts are provided by S317, S318, N319, and S379. Positions 317, 318, 319, and 379 each coordinate dimethylallyl diphosphate. Isopentenyl diphosphate contacts are provided by S317, S318, N319, and S379.

The protein belongs to the IspH family. The cofactor is [4Fe-4S] cluster.

The catalysed reaction is isopentenyl diphosphate + 2 oxidized [2Fe-2S]-[ferredoxin] + H2O = (2E)-4-hydroxy-3-methylbut-2-enyl diphosphate + 2 reduced [2Fe-2S]-[ferredoxin] + 2 H(+). The enzyme catalyses dimethylallyl diphosphate + 2 oxidized [2Fe-2S]-[ferredoxin] + H2O = (2E)-4-hydroxy-3-methylbut-2-enyl diphosphate + 2 reduced [2Fe-2S]-[ferredoxin] + 2 H(+). It participates in isoprenoid biosynthesis; dimethylallyl diphosphate biosynthesis; dimethylallyl diphosphate from (2E)-4-hydroxy-3-methylbutenyl diphosphate: step 1/1. Its pathway is isoprenoid biosynthesis; isopentenyl diphosphate biosynthesis via DXP pathway; isopentenyl diphosphate from 1-deoxy-D-xylulose 5-phosphate: step 6/6. Functionally, catalyzes the conversion of 1-hydroxy-2-methyl-2-(E)-butenyl 4-diphosphate (HMBPP) into a mixture of isopentenyl diphosphate (IPP) and dimethylallyl diphosphate (DMAPP). Acts in the terminal step of the DOXP/MEP pathway for isoprenoid precursor biosynthesis. This chain is 4-hydroxy-3-methylbut-2-enyl diphosphate reductase, found in Synechococcus sp. (strain ATCC 27144 / PCC 6301 / SAUG 1402/1) (Anacystis nidulans).